Here is a 1129-residue protein sequence, read N- to C-terminus: Tyrosine-protein kinase JAK2 (1129 aa).

The FERM domain maps to 35–378; the sequence is PLLQVYLYYS…GYYRLTADAH (344 aa). The residue at position 117 (Tyr117) is a Phosphotyrosine; by autocatalysis. The 82-residue stretch at 399 to 480 folds into the SH2; atypical domain; that stretch reads HGPIFMDFAI…NLKDLLTCYQ (82 aa). Protein kinase domains follow at residues 542–806 and 846–1118; these read LIFE…NSLF and LKFL…DLAQ. 852-860 is a binding site for ATP; the sequence is LGKGNFGSV. Tyr865 bears the Phosphotyrosine; by autocatalysis mark. Lys879 is an ATP binding site. Phosphotyrosine; by autocatalysis occurs at positions 963 and 969. Asp973 (proton acceptor) is an active-site residue. Phosphotyrosine; by autocatalysis is present on residues Tyr1004 and Tyr1005.

The protein belongs to the protein kinase superfamily. Tyr protein kinase family. JAK subfamily. In terms of processing, autophosphorylated, leading to regulate its activity.

It is found in the endomembrane system. Its subcellular location is the nucleus. It catalyses the reaction L-tyrosyl-[protein] + ATP = O-phospho-L-tyrosyl-[protein] + ADP + H(+). Its activity is regulated as follows. Regulated by autophosphorylation, can both activate or decrease activity. Heme regulates its activity by enhancing the phosphorylation on Tyr-1004 and Tyr-1005. Functionally, non-receptor tyrosine kinase involved in various processes such as cell growth, development, differentiation or histone modifications. Mediates essential signaling events in both innate and adaptive immunity. In the cytoplasm, plays a pivotal role in signal transduction via its association with cytokine receptors. Following ligand-binding to cell surface receptors, phosphorylates specific tyrosine residues on the cytoplasmic tails of the receptor, creating docking sites for STATs proteins. Subsequently, phosphorylates the STATs proteins once they are recruited to the receptor. Phosphorylated STATs then form homodimer or heterodimers and translocate to the nucleus to activate gene transcription. For example, cell stimulation with erythropoietin (EPO) during erythropoiesis leads to JAK2 autophosphorylation, activation, and its association with erythropoietin receptor (EPOR) that becomes phosphorylated in its cytoplasmic domain. Then, STAT5 (STAT5A or STAT5B) is recruited, phosphorylated and activated by JAK2. Once activated, dimerized STAT5 translocates into the nucleus and promotes the transcription of several essential genes involved in the modulation of erythropoiesis. Part of a signaling cascade that is activated by increased cellular retinol and that leads to the activation of STAT5 (STAT5A or STAT5B). In the nucleus, plays a key role in chromatin by specifically mediating phosphorylation of 'Tyr-41' of histone H3 (H3Y41ph), a specific tag that promotes exclusion of CBX5 (HP1 alpha) from chromatin. Up-regulates the potassium voltage-gated channel activity of KCNA3. In Gallus gallus (Chicken), this protein is Tyrosine-protein kinase JAK2.